Consider the following 238-residue polypeptide: U2 small nuclear ribonucleoprotein A' (238 aa).

4 LRR repeats span residues K19 to K40, T42 to K63, N64 to P84, and H89 to C110. One can recognise an LRRCT domain in the interval N123–L161.

The protein belongs to the U2 small nuclear ribonucleoprotein A family. In terms of assembly, associated with the spliceosome.

Its subcellular location is the nucleus. Involved in pre-mRNA splicing. The protein is U2 small nuclear ribonucleoprotein A' (LEA1) of Debaryomyces hansenii (strain ATCC 36239 / CBS 767 / BCRC 21394 / JCM 1990 / NBRC 0083 / IGC 2968) (Yeast).